The sequence spans 106 residues: Iron-sulfur cluster assembly protein CyaY (106 aa).

It belongs to the frataxin family.

In terms of biological role, involved in iron-sulfur (Fe-S) cluster assembly. May act as a regulator of Fe-S biogenesis. In Yersinia pseudotuberculosis serotype O:3 (strain YPIII), this protein is Iron-sulfur cluster assembly protein CyaY.